The chain runs to 275 residues: 4-hydroxy-3-methylbut-2-enyl diphosphate reductase (275 aa).

Cys12 provides a ligand contact to [4Fe-4S] cluster. Residues His36 and His70 each contribute to the (2E)-4-hydroxy-3-methylbut-2-enyl diphosphate site. Positions 36 and 70 each coordinate dimethylallyl diphosphate. His36 and His70 together coordinate isopentenyl diphosphate. Cys92 is a binding site for [4Fe-4S] cluster. His120 lines the (2E)-4-hydroxy-3-methylbut-2-enyl diphosphate pocket. A dimethylallyl diphosphate-binding site is contributed by His120. His120 lines the isopentenyl diphosphate pocket. The active-site Proton donor is the Glu122. Residue Thr157 coordinates (2E)-4-hydroxy-3-methylbut-2-enyl diphosphate. Cys185 is a [4Fe-4S] cluster binding site. Residues Ser213, Ser214, Asn215, and Ser257 each coordinate (2E)-4-hydroxy-3-methylbut-2-enyl diphosphate. Dimethylallyl diphosphate contacts are provided by Ser213, Ser214, Asn215, and Ser257. Isopentenyl diphosphate contacts are provided by Ser213, Ser214, Asn215, and Ser257.

This sequence belongs to the IspH family. Requires [4Fe-4S] cluster as cofactor.

It catalyses the reaction isopentenyl diphosphate + 2 oxidized [2Fe-2S]-[ferredoxin] + H2O = (2E)-4-hydroxy-3-methylbut-2-enyl diphosphate + 2 reduced [2Fe-2S]-[ferredoxin] + 2 H(+). The enzyme catalyses dimethylallyl diphosphate + 2 oxidized [2Fe-2S]-[ferredoxin] + H2O = (2E)-4-hydroxy-3-methylbut-2-enyl diphosphate + 2 reduced [2Fe-2S]-[ferredoxin] + 2 H(+). Its pathway is isoprenoid biosynthesis; dimethylallyl diphosphate biosynthesis; dimethylallyl diphosphate from (2E)-4-hydroxy-3-methylbutenyl diphosphate: step 1/1. It participates in isoprenoid biosynthesis; isopentenyl diphosphate biosynthesis via DXP pathway; isopentenyl diphosphate from 1-deoxy-D-xylulose 5-phosphate: step 6/6. In terms of biological role, catalyzes the conversion of 1-hydroxy-2-methyl-2-(E)-butenyl 4-diphosphate (HMBPP) into a mixture of isopentenyl diphosphate (IPP) and dimethylallyl diphosphate (DMAPP). Acts in the terminal step of the DOXP/MEP pathway for isoprenoid precursor biosynthesis. In Nitratiruptor sp. (strain SB155-2), this protein is 4-hydroxy-3-methylbut-2-enyl diphosphate reductase.